The chain runs to 704 residues: Elongation factor G (704 aa).

The tr-type G domain occupies 8-291 (DKVRNIGIMA…AVVEYLASPV (284 aa)). Residues 17–24 (AHIDAGKT), 90–94 (DTPGH), and 144–147 (NKMD) contribute to the GTP site.

The protein belongs to the TRAFAC class translation factor GTPase superfamily. Classic translation factor GTPase family. EF-G/EF-2 subfamily.

The protein resides in the cytoplasm. Its function is as follows. Catalyzes the GTP-dependent ribosomal translocation step during translation elongation. During this step, the ribosome changes from the pre-translocational (PRE) to the post-translocational (POST) state as the newly formed A-site-bound peptidyl-tRNA and P-site-bound deacylated tRNA move to the P and E sites, respectively. Catalyzes the coordinated movement of the two tRNA molecules, the mRNA and conformational changes in the ribosome. The sequence is that of Elongation factor G from Pelodictyon phaeoclathratiforme (strain DSM 5477 / BU-1).